We begin with the raw amino-acid sequence, 87 residues long: Beta-toxin Cn4 (87 aa).

The first 19 residues, 1-19 (MNSLLMITACLALVGTVWA), serve as a signal peptide directing secretion. In terms of domain architecture, LCN-type CS-alpha/beta spans 20–85 (KEGYLVNSYT…VWPLKNKTCN (66 aa)). Intrachain disulfides connect Cys-31-Cys-84, Cys-35-Cys-60, Cys-44-Cys-65, and Cys-48-Cys-67. Residue Asn-85 is modified to Asparagine amide.

Belongs to the long (4 C-C) scorpion toxin superfamily. Sodium channel inhibitor family. Beta subfamily. In terms of tissue distribution, expressed by the venom gland.

The protein resides in the secreted. Beta toxins bind voltage-independently at site-4 of sodium channels (Nav) and shift the voltage of activation toward more negative potentials thereby affecting sodium channel activation and promoting spontaneous and repetitive firing. This toxin affects the activation mechanism of sodium channels of squid axon. It also competes with Cn2 in rat brain synaptosomes. Is lethal to mice. The polypeptide is Beta-toxin Cn4 (Centruroides noxius (Mexican scorpion)).